The primary structure comprises 859 residues: Active breakpoint cluster region-related protein (859 aa).

The disordered stretch occupies residues 31–84; sequence AEGHEEQKGPPEGSETMPYIDESPTMSPQLSARSQGGGESISPTPPEGLAPGVE. Positions 54–64 are enriched in polar residues; that stretch reads PTMSPQLSARS. S57 is modified (phosphoserine). The DH domain occupies 91 to 284; sequence MRKLVLSGFL…QNFLSSINED (194 aa). The PH domain maps to 301 to 459; sequence QLVKDGFLVE…WREAIQKLQK (159 aa). A C2 domain is found at 484–613; it reads TVHNIPVTSN…ESKNWHTDVI (130 aa). In terms of domain architecture, Rho-GAP spans 647-845; it reads VKISVVTKRE…YYLQHPPISF (199 aa).

In terms of assembly, interacts with DLG4. Expressed in brain, including the cortex, hippocampus, cerebellum, and brainstem, as well as the spinal cord (at protein level).

It localises to the cell projection. Its subcellular location is the dendritic spine. It is found in the axon. The protein localises to the synapse. Its function is as follows. Protein with a unique structure having two opposing regulatory activities toward small GTP-binding proteins. The C-terminus is a GTPase-activating protein domain which stimulates GTP hydrolysis by RAC1, RAC2 and CDC42. Accelerates the intrinsic rate of GTP hydrolysis of RAC1 or CDC42, leading to down-regulation of the active GTP-bound form. The central Dbl homology (DH) domain functions as guanine nucleotide exchange factor (GEF) that modulates the GTPases CDC42, RHOA and RAC1. Promotes the conversion of CDC42, RHOA and RAC1 from the GDP-bound to the GTP-bound form. Functions as an important negative regulator of neuronal RAC1 activity. Regulates macrophage functions such as CSF-1 directed motility and phagocytosis through the modulation of RAC1 activity. The chain is Active breakpoint cluster region-related protein from Rattus norvegicus (Rat).